A 454-amino-acid chain; its full sequence is Putative serine/threonine-protein phosphatase C27B7.6 (454 aa).

Residues aspartate 65, histidine 67, aspartate 93, and asparagine 125 each coordinate Mn(2+). The active-site Proton donor is histidine 126. Mn(2+) contacts are provided by histidine 174 and histidine 252. The tract at residues 414–454 (RKKLGMTTSTTPPPPRTPSPDAPLAQSPPIPRSPPSSTENA) is disordered. The segment covering 424–447 (TPPPPRTPSPDAPLAQSPPIPRSP) has biased composition (pro residues).

Belongs to the PPP phosphatase family. PP-1 subfamily. It depends on Mn(2+) as a cofactor.

The catalysed reaction is O-phospho-L-seryl-[protein] + H2O = L-seryl-[protein] + phosphate. It catalyses the reaction O-phospho-L-threonyl-[protein] + H2O = L-threonyl-[protein] + phosphate. This chain is Putative serine/threonine-protein phosphatase C27B7.6, found in Caenorhabditis elegans.